Consider the following 142-residue polypeptide: Prefoldin subunit alpha 2 (142 aa).

Belongs to the prefoldin subunit alpha family. As to quaternary structure, heterohexamer of two alpha and four beta subunits.

The protein localises to the cytoplasm. Molecular chaperone capable of stabilizing a range of proteins. Seems to fulfill an ATP-independent, HSP70-like function in archaeal de novo protein folding. This Thermococcus kodakarensis (strain ATCC BAA-918 / JCM 12380 / KOD1) (Pyrococcus kodakaraensis (strain KOD1)) protein is Prefoldin subunit alpha 2.